The sequence spans 773 residues: E3 ubiquitin-protein ligase msl-2 (773 aa).

Residues C41, C44, C59, H61, C64, C67, C78, and C84 each contribute to the Zn(2+) site. The segment at 41–85 (CVVCCQLLVDPYSPKGKRCQHNVCRLCLRGKKHLFPSCTQCEGCS) adopts an RING-type zinc-finger fold. Positions 424 to 468 (VQTELQDAESLQKDFEDAKAAAEEAKEKEKDLHAISAELQKEDSD) form a coiled coil. The segment at 460-525 (AELQKEDSDE…EKVKPPKPKC (66 aa)) is disordered. Positions 520–571 (PPKPKCRCGISGSSNTLTTCRNSRCPCYKSYNSCAGCHCVCCKNPHKEDYVE) constitute a CXC MSL2-type domain. Zn(2+) is bound by residues C525, C527, C539, C544, C546, C553, C556, C558, and C561. Residues 571 to 773 (ESDEDDDLED…EEIMSGSDDL (203 aa)) form a C-terminal disordered region (CTD) region. Acidic residues predominate over residues 572–581 (SDEDDDLEDF). Residues 572–616 (SDEDDDLEDFEMPKDVPEPMTQSEEPVVAEPRQEENSMAPPDSSA) are disordered. The clamp-binding domain (CBD) stretch occupies residues 620–685 (LVPLNNLQQS…SLPQYAYIMP (66 aa)). The segment at 650 to 708 (QGSKPLDPVTVGFTIRVQLQHTDGFGSLPQYAYIMPTIDPPNPPAPSLSPPPPPAPDRE) is pro/Bas region. Residues 687-704 (IDPPNPPAPSLSPPPPPA) are compositionally biased toward pro residues. Residues 687–773 (IDPPNPPAPS…EEIMSGSDDL (87 aa)) are disordered. Positions 705–714 (PDREVIEPPA) are enriched in basic and acidic residues. Residues 715 to 726 (KKFRTSRTRRGR) show a composition bias toward basic residues. Residues 742-759 (GSRSNSAAGDRSSATDNA) are compositionally biased toward polar residues.

The protein belongs to the MSL2 family. As to quaternary structure, component of the male-specific lethal (MSL) histone acetyltransferase complex, composed of mof, mle, msl-1, msl-2 and msl-3 proteins, as well as roX1 and roX2 non-coding RNAs. When not associated with chromatin, the MSL complex associates with msl-2 mRNAs, possibly to regulate the amount of available MSL complex. Interacts with Clamp; promoting cooperative binding to DNA PionX sites and recruitment of the MSL complex to chromatin. Post-translationally, autoubiquitinated.

It localises to the nucleus. The protein resides in the chromosome. It carries out the reaction S-ubiquitinyl-[E2 ubiquitin-conjugating enzyme]-L-cysteine + [acceptor protein]-L-lysine = [E2 ubiquitin-conjugating enzyme]-L-cysteine + N(6)-ubiquitinyl-[acceptor protein]-L-lysine.. It participates in protein modification; protein ubiquitination. Its function is as follows. Limiting component of the male-specific lethal (MSL) histone acetyltransferase complex, a multiprotein complex essential for elevating transcription of the single X chromosome in the male (X chromosome dosage compensation). The MSL complex specifically associates with the single X chromosome in males and mediates formation of H4K16ac, promoting a two-fold activation of X chromosome. Msl-2 is only produced in males, constituting the limiting component of the MSL complex. Within the MSL complex, msl-2 mediates the selective binding to the X chromosome and recruitment of the MSL complex via two different mechanisms. Recognizes DNA motifs that are enriched on X chromosome, named PionX sites, which are characterized by sequence features and distinct DNA conformation (base roll). Specific recognition of the X chromosome is also mediated by the formation of a gel-like state: msl-2 undergoes liquid-liquid phase separation upon binding to roX1 and roX2 non-coding RNAs, leading to nucleate the MSL complex on the X chromosome. Msl-2 is also required for translation and/or stability of msl-1 in males. Also acts as an E3 ubiquitin ligase: in complex with msl-1, mediates ubiquitination of histone H2B at 'Lys-34' (H2BK34Ub). Also catalyzes ubiquitination of msl-1, msl-3 and mof components of the MSL complex. This chain is E3 ubiquitin-protein ligase msl-2, found in Drosophila melanogaster (Fruit fly).